We begin with the raw amino-acid sequence, 70 residues long: Conotoxin elongated-tx3a-a (70 aa).

A signal peptide spans 1–24 (MLKMGVVLFIFLVLFPLATLQLDA). Positions 25 to 44 (DQPVERYAENKQLLSPDERR) are excised as a propeptide. Disulfide bonds link Cys-55–Cys-68, Cys-56–Cys-66, and Cys-61–Cys-69. Trp-58 is modified (6'-bromotryptophan; partial). Cys-69 carries the post-translational modification Cysteine amide; partial.

Belongs to the conotoxin M superfamily. In terms of processing, two short peptides are produced from this precursor; Conotoxin tx3a-b is amidated at Cys-69 (but has no bromotryptophan), whereas conotoxin tx3a-a has an unmodified Gly-70 and a bromotryptophan. Two elongated peptides are also produced; Conotoxin elongated-tx3a-b is amidated at Cys-69 (but has no bromotryptophan), whereas conotoxin elongated tx3a-a has an unmodified Gly-70 (but has no bromotryptophan). Post-translationally, ju et al. (2022) describe a disulfide connectivity (C55-C61; C56-C69; C66-C68) that differs from that of Han and colleagues (2006), McDougal et al. (2008), and Ueberheide et al. (2009). As to expression, expressed by the venom duct. Is present in all duct parts with a highest content in part 2 (proximal of the venom bulb) and then decreases in concentration toward the end of the duct.

It localises to the secreted. Functionally, intracranial injection into mice causes scratching and hyperactivity. In vitro, inhibits proliferation of the mice ovarian cancer cells ID8. This Conus textile (Cloth-of-gold cone) protein is Conotoxin elongated-tx3a-a.